We begin with the raw amino-acid sequence, 98 residues long: NADH-ubiquinone oxidoreductase chain 4L (98 aa).

Transmembrane regions (helical) follow at residues 1 to 21, 29 to 49, and 61 to 81; these read MSLTYMNMFMAFTISLLGLLM, SLLCLEGMMLSLFVMMTMTIL, and IILLVFAACEAALGLSLLVMV.

Belongs to the complex I subunit 4L family. As to quaternary structure, core subunit of respiratory chain NADH dehydrogenase (Complex I) which is composed of 45 different subunits.

It localises to the mitochondrion inner membrane. It carries out the reaction a ubiquinone + NADH + 5 H(+)(in) = a ubiquinol + NAD(+) + 4 H(+)(out). Functionally, core subunit of the mitochondrial membrane respiratory chain NADH dehydrogenase (Complex I) which catalyzes electron transfer from NADH through the respiratory chain, using ubiquinone as an electron acceptor. Part of the enzyme membrane arm which is embedded in the lipid bilayer and involved in proton translocation. In Vampyressa brocki (Brock's yellow-eared bat), this protein is NADH-ubiquinone oxidoreductase chain 4L (MT-ND4L).